An 837-amino-acid polypeptide reads, in one-letter code: AdoMet-dependent rRNA methyltransferase SPB1 (837 aa).

S-adenosyl-L-methionine-binding residues include G58, W60, D78, D94, and D119. The Proton acceptor role is filled by K159. A coiled-coil region spans residues L345–T390. Disordered regions lie at residues Q359–L381, F483–D529, T573–E644, and T779–K808. The segment covering R372–L381 has biased composition (basic and acidic residues). Residues E518–D529 are compositionally biased toward acidic residues. The span at S593–L602 shows a compositional bias: basic and acidic residues. Residues S603–D635 show a composition bias toward acidic residues.

The protein belongs to the class I-like SAM-binding methyltransferase superfamily. RNA methyltransferase RlmE family. SPB1 subfamily. As to quaternary structure, component of the nucleolar and nucleoplasmic pre-60S ribosomal particle.

The protein resides in the nucleus. Its subcellular location is the nucleolus. It carries out the reaction a ribonucleotide in rRNA + S-adenosyl-L-methionine = a 2'-O-methylribonucleotide in rRNA + S-adenosyl-L-homocysteine + H(+). In terms of biological role, required for proper assembly of pre-ribosomal particles during the biogenesis of the 60S ribosomal subunit. The polypeptide is AdoMet-dependent rRNA methyltransferase SPB1 (Candida glabrata (strain ATCC 2001 / BCRC 20586 / JCM 3761 / NBRC 0622 / NRRL Y-65 / CBS 138) (Yeast)).